The following is a 193-amino-acid chain: NADPH:quinone oxidoreductase MdaB (193 aa).

FAD is bound by residues Ser16 to Thr23, Gly69 to Met72, Tyr108, and Thr124 to Ala127.

It belongs to the oxidoreductase MdaB family. In terms of assembly, homodimer. It depends on FAD as a cofactor.

The protein resides in the cytoplasm. The catalysed reaction is a quinone + NADPH + H(+) = a quinol + NADP(+). Its function is as follows. NADPH-specific quinone reductase. The polypeptide is NADPH:quinone oxidoreductase MdaB (Escherichia coli O157:H7).